The following is a 354-amino-acid chain: C-C chemokine receptor type 5 (354 aa).

Topologically, residues 1–32 (MDFQGSVPTYSYDIDYGMSAPCQKINVKQIAA) are extracellular. Residue serine 6 is glycosylated (O-linked (GalNAc...) serine). Sulfotyrosine occurs at positions 10, 12, and 16. Cystine bridges form between cysteine 22–cysteine 271 and cysteine 103–cysteine 180. The chain crosses the membrane as a helical span at residues 33 to 60 (QLLPPLYSLVFIFGFVGNMMVFLILISC). Residues 61-70 (KKLKSVTDIY) are Cytoplasmic-facing. A helical transmembrane segment spans residues 71 to 91 (LLNLAISDLLFLLTLPFWAHY). Residues 92 to 104 (AANEWVFGNIMCK) lie on the Extracellular side of the membrane. Residues 105 to 126 (VFTGLYHIGYFGGIFFIILLTI) traverse the membrane as a helical segment. Topologically, residues 127-143 (DRYLAIVHAVFALKVRT) are cytoplasmic. Residues 144–168 (VNFGVITSVVTWAVAVFASLPEIIF) traverse the membrane as a helical segment. Topologically, residues 169 to 200 (TRSQKEGFHYTCSPHFPHTQYHFWKSFQTLKM) are extracellular. Residues 201–220 (VILSLILPLLVMVICYSGIL) traverse the membrane as a helical segment. At 221 to 237 (HTLFRCRNEKKRHRAVR) the chain is on the cytoplasmic side. The chain crosses the membrane as a helical span at residues 238-262 (LIFAIMIVYFLFWTPYNIVLLLTTF). Over 263–279 (QEFFGLNNCSSSNRLDQ) the chain is Extracellular. Residues 280–303 (AMQATETLGMTHCCLNPVIYAFVG) traverse the membrane as a helical segment. Residues 304–354 (EKFRSYLSVFFRKHMVKRFCKRCSIFQQDNPDRASSVYTRSTGEHEVSTGL) are Cytoplasmic-facing. S-palmitoyl cysteine attachment occurs at residues cysteine 323 and cysteine 326. 4 positions are modified to phosphoserine; by BARK1: serine 338, serine 339, serine 344, and serine 351.

The protein belongs to the G-protein coupled receptor 1 family. As to quaternary structure, interacts with PRAF2. Efficient ligand binding to CCL3/MIP-1alpha and CCL4/MIP-1beta requires sulfation, O-glycosylation and sialic acid modifications. Glycosylation on Ser-6 is required for efficient binding of CCL4. Interacts with GRK2. Interacts with ARRB1 and ARRB2. Interacts with CNIH4. Interacts with S100A4; this interaction stimulates T-lymphocyte chemotaxis. Sulfated on at least 2 of the N-terminal tyrosines. Sulfation is required for efficient binding of the chemokines, CCL3 and CCL4. In terms of processing, O-glycosylated, but not N-glycosylated. Ser-6 appears to be the major site. Also sialylated glycans present which contribute to chemokine binding. Post-translationally, palmitoylation in the C-terminal is important for cell surface expression. Phosphorylation on serine residues in the C-terminal is stimulated by binding CC chemokines especially by APO-RANTES.

The protein localises to the cell membrane. Its function is as follows. Receptor for a number of inflammatory CC-chemokines including CCL3/MIP-1-alpha, CCL4/MIP-1-beta and RANTES and subsequently transduces a signal by increasing the intracellular calcium ion level. May play a role in the control of granulocytic lineage proliferation or differentiation. Participates in T-lymphocyte migration to the infection site by acting as a chemotactic receptor. The chain is C-C chemokine receptor type 5 (Ccr5) from Mus musculus (Mouse).